The chain runs to 53 residues: Neuronal protein NP-190 (53 aa).

Mainly expressed in the fetal brain where it is specifically localized to the proximal axonal segments, cell bodies and growth cones. Lower level of expression was also detected in the fetal heart and the skeletal muscle. No expression in kidney, liver, lung or spleen.

The protein localises to the membrane. In terms of biological role, neuronal antigen that may play a role in brain development. May be involved in neurite formation or axonal guidance. The protein is Neuronal protein NP-190 of Sus scrofa (Pig).